The following is a 437-amino-acid chain: Serine--tRNA ligase (437 aa).

227-229 provides a ligand contact to L-serine; it reads TAE. Residues 258–260 and valine 274 each bind ATP; that span reads RSE. Residue glutamate 281 participates in L-serine binding. ATP is bound at residue 347–350; sequence ETHS. Residue threonine 382 coordinates L-serine.

Belongs to the class-II aminoacyl-tRNA synthetase family. Type-1 seryl-tRNA synthetase subfamily. In terms of assembly, homodimer. The tRNA molecule binds across the dimer.

It localises to the cytoplasm. The catalysed reaction is tRNA(Ser) + L-serine + ATP = L-seryl-tRNA(Ser) + AMP + diphosphate + H(+). It carries out the reaction tRNA(Sec) + L-serine + ATP = L-seryl-tRNA(Sec) + AMP + diphosphate + H(+). It functions in the pathway aminoacyl-tRNA biosynthesis; selenocysteinyl-tRNA(Sec) biosynthesis; L-seryl-tRNA(Sec) from L-serine and tRNA(Sec): step 1/1. Functionally, catalyzes the attachment of serine to tRNA(Ser). Is also able to aminoacylate tRNA(Sec) with serine, to form the misacylated tRNA L-seryl-tRNA(Sec), which will be further converted into selenocysteinyl-tRNA(Sec). The protein is Serine--tRNA ligase of Deinococcus geothermalis (strain DSM 11300 / CIP 105573 / AG-3a).